We begin with the raw amino-acid sequence, 420 residues long: ATP phosphoribosyltransferase regulatory subunit (420 aa).

It belongs to the class-II aminoacyl-tRNA synthetase family. HisZ subfamily. As to quaternary structure, heteromultimer composed of HisG and HisZ subunits.

Its subcellular location is the cytoplasm. It participates in amino-acid biosynthesis; L-histidine biosynthesis; L-histidine from 5-phospho-alpha-D-ribose 1-diphosphate: step 1/9. Required for the first step of histidine biosynthesis. May allow the feedback regulation of ATP phosphoribosyltransferase activity by histidine. The chain is ATP phosphoribosyltransferase regulatory subunit from Bacillus cereus (strain G9842).